The sequence spans 165 residues: Ribosome maturation factor RimM (165 aa).

Residues 92 to 163 (EARHYWADLE…RVVVDPPEGL (72 aa)) enclose the PRC barrel domain.

Belongs to the RimM family. In terms of assembly, binds ribosomal protein uS19.

The protein resides in the cytoplasm. Functionally, an accessory protein needed during the final step in the assembly of 30S ribosomal subunit, possibly for assembly of the head region. Essential for efficient processing of 16S rRNA. May be needed both before and after RbfA during the maturation of 16S rRNA. It has affinity for free ribosomal 30S subunits but not for 70S ribosomes. The protein is Ribosome maturation factor RimM of Anaeromyxobacter sp. (strain Fw109-5).